Here is a 63-residue protein sequence, read N- to C-terminus: Large ribosomal subunit protein uL29 (63 aa).

Belongs to the universal ribosomal protein uL29 family.

The polypeptide is Large ribosomal subunit protein uL29 (Shigella dysenteriae serotype 1 (strain Sd197)).